Here is a 109-residue protein sequence, read N- to C-terminus: Sperm-specific class P protein 9/11 (109 aa).

One can recognise an MSP domain in the interval 2–109 (SLTADPPACT…TVTIPMSATA (108 aa)).

As to expression, expressed at higher level in testis.

The chain is Sperm-specific class P protein 9/11 (ssp-9) from Caenorhabditis elegans.